Consider the following 293-residue polypeptide: uncharacterized protein (293 aa).

2 disordered regions span residues 20–148 (ELHS…NNNT) and 226–283 (RENQ…GNKN). Acidic residues-rich tracts occupy residues 37–47 (LEDDEEYDDDQ), 56–91 (EEFD…DDEM), and 99–112 (NIDD…EEEQ). Composition is skewed to low complexity over residues 117–148 (TNNN…NNNT) and 232–283 (NSNS…GNKN).

This is an uncharacterized protein from Dictyostelium discoideum (Social amoeba).